We begin with the raw amino-acid sequence, 365 residues long: 3-dehydroquinate synthase (365 aa).

Residues 106–110 (GVIGD), 130–131 (TT), Lys-142, Lys-151, and 169–172 (FFAT) each bind NAD(+). 3 residues coordinate Zn(2+): Glu-184, His-247, and His-264.

The protein belongs to the sugar phosphate cyclases superfamily. Dehydroquinate synthase family. Co(2+) is required as a cofactor. The cofactor is Zn(2+). Requires NAD(+) as cofactor.

The protein resides in the cytoplasm. It carries out the reaction 7-phospho-2-dehydro-3-deoxy-D-arabino-heptonate = 3-dehydroquinate + phosphate. It participates in metabolic intermediate biosynthesis; chorismate biosynthesis; chorismate from D-erythrose 4-phosphate and phosphoenolpyruvate: step 2/7. Its function is as follows. Catalyzes the conversion of 3-deoxy-D-arabino-heptulosonate 7-phosphate (DAHP) to dehydroquinate (DHQ). The protein is 3-dehydroquinate synthase of Listeria monocytogenes serotype 4b (strain CLIP80459).